A 155-amino-acid polypeptide reads, in one-letter code: Endoribonuclease YbeY (155 aa).

Zn(2+)-binding residues include His-120, His-124, and His-130.

This sequence belongs to the endoribonuclease YbeY family. Requires Zn(2+) as cofactor.

The protein localises to the cytoplasm. In terms of biological role, single strand-specific metallo-endoribonuclease involved in late-stage 70S ribosome quality control and in maturation of the 3' terminus of the 16S rRNA. The chain is Endoribonuclease YbeY from Borreliella burgdorferi (strain ATCC 35210 / DSM 4680 / CIP 102532 / B31) (Borrelia burgdorferi).